The primary structure comprises 309 residues: MDDKAFTKELDQWVEQLNECKQLNENQVRTLCEKAKEILTKESNVQEVRCPVTVCGDVHGQFHDLMELFRIGGKSPDTNYLFMGDYVDRGYYSVETVTLLVALKVRYPERITILRGNHESRQITQVYGFYDECLRKYGNANVWKYFTDLFDYLPLTALVDGQIFCLHGGLSPSIDTLDHIRALDRLQEVPHEGPMCDLLWSDPDDRGGWGISPRGAGYTFGQDISETFNHANGLTLVSRAHQLVMEGYNWCHDRNVVTIFSAPNYCYRCGNQAAIMELDDTLKYSFLQFDPAPRRGEPHVTRRTPDYFL.

The Mn(2+) site is built by Asp-57, His-59, Asp-85, and Asn-117. Catalysis depends on His-118, which acts as the Proton donor. Mn(2+)-binding residues include His-167 and His-241. Residue Tyr-307 is modified to Phosphotyrosine. At Leu-309 the chain carries Leucine methyl ester.

The protein belongs to the PPP phosphatase family. PP-1 subfamily. PP2A consists of a common heterodimeric core enzyme (composed of a 36 kDa catalytic subunit (subunit C) and a 65 kDa constant regulatory subunit (PR65) (subunit A)) that associates with a variety of regulatory subunits. Proteins that associate with the core dimer include three families of regulatory subunits B (the R2/B/PR55/B55, R3/B''/PR72/PR130/PR59 and R5/B'/B56 families), the 48 kDa variable regulatory subunit, viral proteins, and cell signaling molecules. Binds PPME1. May indirectly interact with SGO1, most probably through regulatory B56 subunits. Interacts with CTTNBP2NL. Interacts with PTPA. Found in a complex with at least ARL2, PPP2CB, PPP2R1A, PPP2R2A, PPP2R5E and TBCD. Interacts with TBCD. Part of the core of STRIPAK complexes composed of PP2A catalytic and scaffolding subunits, the striatins (PP2A regulatory subunits), the striatin-associated proteins MOB4, STRIP1 and STRIP2, PDCD10 and members of the STE20 kinases, such as STK24 and STK26. Mn(2+) is required as a cofactor. Reversibly methyl esterified on Leu-309 by leucine carboxyl methyltransferase 1 (Lcmt1) and protein phosphatase methylesterase 1 (Ppme1). Carboxyl methylation influences the affinity of the catalytic subunit for the different regulatory subunits, thereby modulating the PP2A holoenzyme's substrate specificity, enzyme activity and cellular localization. Post-translationally, phosphorylation of either threonine (by autophosphorylation-activated protein kinase) or tyrosine results in inactivation of the phosphatase. Auto-dephosphorylation has been suggested as a mechanism for reactivation. In terms of processing, may be monoubiquitinated by NOSIP.

Its subcellular location is the cytoplasm. The protein localises to the nucleus. It is found in the chromosome. The protein resides in the centromere. It localises to the cytoskeleton. Its subcellular location is the spindle pole. It carries out the reaction O-phospho-L-seryl-[protein] + H2O = L-seryl-[protein] + phosphate. The catalysed reaction is O-phospho-L-threonyl-[protein] + H2O = L-threonyl-[protein] + phosphate. Functionally, catalytic subunit of protein phosphatase 2A (PP2A), a serine/threonine phosphatase involved in the regulation of a wide variety of enzymes, signal transduction pathways, and cellular events. PP2A can modulate the activity of phosphorylase B kinase, casein kinase 2, mitogen-stimulated S6 kinase, and MAP-2 kinase. Part of the striatin-interacting phosphatase and kinase (STRIPAK) complexes. STRIPAK complexes have critical roles in protein (de)phosphorylation and are regulators of multiple signaling pathways including Hippo, MAPK, nuclear receptor and cytoskeleton remodeling. Different types of STRIPAK complexes are involved in a variety of biological processes such as cell growth, differentiation, apoptosis, metabolism and immune regulation. The sequence is that of Serine/threonine-protein phosphatase 2A catalytic subunit beta isoform (Ppp2cb) from Mus musculus (Mouse).